Reading from the N-terminus, the 235-residue chain is ATP phosphoribosyltransferase (235 aa).

It belongs to the ATP phosphoribosyltransferase family. Short subfamily. As to quaternary structure, heteromultimer composed of HisG and HisZ subunits.

The protein resides in the cytoplasm. The catalysed reaction is 1-(5-phospho-beta-D-ribosyl)-ATP + diphosphate = 5-phospho-alpha-D-ribose 1-diphosphate + ATP. The protein operates within amino-acid biosynthesis; L-histidine biosynthesis; L-histidine from 5-phospho-alpha-D-ribose 1-diphosphate: step 1/9. Catalyzes the condensation of ATP and 5-phosphoribose 1-diphosphate to form N'-(5'-phosphoribosyl)-ATP (PR-ATP). Has a crucial role in the pathway because the rate of histidine biosynthesis seems to be controlled primarily by regulation of HisG enzymatic activity. The protein is ATP phosphoribosyltransferase of Synechococcus sp. (strain JA-2-3B'a(2-13)) (Cyanobacteria bacterium Yellowstone B-Prime).